Consider the following 91-residue polypeptide: Teretoxin Tan6.2 (91 aa).

The first 21 residues, 1–21 (MATSGRLLCVCLVLGLVFGSL), serve as a signal peptide directing secretion. Residues 22–50 (GYPVMEKKRAGKNFDLGTIANWAWQIGEK) constitute a propeptide that is removed on maturation.

Belongs to the teretoxin M (TM) superfamily. Contains 3 disulfide bonds. As to expression, expressed by the venom duct.

It localises to the secreted. The sequence is that of Teretoxin Tan6.2 from Terebra anilis (Auger snail).